We begin with the raw amino-acid sequence, 66 residues long: Phylloseptin-H9 (66 aa).

An N-terminal signal peptide occupies residues 1–22; sequence MAFLKKSLFLVLFLGLVSLSIC. The propeptide occupies 23-44; that stretch reads EEEKRETEEEENDQEEDDKSEE. Residues 24–44 form a disordered region; that stretch reads EEKRETEEEENDQEEDDKSEE. Over residues 30 to 41 the composition is skewed to acidic residues; it reads EEEENDQEEDDK. Leucine amide is present on leucine 65.

Expressed by the skin glands.

The protein localises to the secreted. Its function is as follows. Has antimicrobial activity. In Pithecopus hypochondrialis (Orange-legged leaf frog), this protein is Phylloseptin-H9.